The chain runs to 179 residues: Large ribosomal subunit protein uL6 (179 aa).

This sequence belongs to the universal ribosomal protein uL6 family. Part of the 50S ribosomal subunit.

Functionally, this protein binds to the 23S rRNA, and is important in its secondary structure. It is located near the subunit interface in the base of the L7/L12 stalk, and near the tRNA binding site of the peptidyltransferase center. The polypeptide is Large ribosomal subunit protein uL6 (Trichlorobacter lovleyi (strain ATCC BAA-1151 / DSM 17278 / SZ) (Geobacter lovleyi)).